The primary structure comprises 345 residues: Phosphoribosylformylglycinamidine cyclo-ligase (345 aa).

This sequence belongs to the AIR synthase family.

Its subcellular location is the cytoplasm. The enzyme catalyses 2-formamido-N(1)-(5-O-phospho-beta-D-ribosyl)acetamidine + ATP = 5-amino-1-(5-phospho-beta-D-ribosyl)imidazole + ADP + phosphate + H(+). Its pathway is purine metabolism; IMP biosynthesis via de novo pathway; 5-amino-1-(5-phospho-D-ribosyl)imidazole from N(2)-formyl-N(1)-(5-phospho-D-ribosyl)glycinamide: step 2/2. The sequence is that of Phosphoribosylformylglycinamidine cyclo-ligase from Escherichia coli O139:H28 (strain E24377A / ETEC).